The chain runs to 390 residues: Chorismate synthase (390 aa).

2 residues coordinate NADP(+): arginine 40 and arginine 46. FMN-binding positions include 129 to 131 (RAS), 249 to 250 (QA), glycine 294, 309 to 313 (KPIPT), and arginine 335.

This sequence belongs to the chorismate synthase family. In terms of assembly, homotetramer. The cofactor is FMNH2.

It carries out the reaction 5-O-(1-carboxyvinyl)-3-phosphoshikimate = chorismate + phosphate. The protein operates within metabolic intermediate biosynthesis; chorismate biosynthesis; chorismate from D-erythrose 4-phosphate and phosphoenolpyruvate: step 7/7. Its function is as follows. Catalyzes the anti-1,4-elimination of the C-3 phosphate and the C-6 proR hydrogen from 5-enolpyruvylshikimate-3-phosphate (EPSP) to yield chorismate, which is the branch point compound that serves as the starting substrate for the three terminal pathways of aromatic amino acid biosynthesis. This reaction introduces a second double bond into the aromatic ring system. This is Chorismate synthase from Desulforudis audaxviator (strain MP104C).